Reading from the N-terminus, the 205-residue chain is High frequency lysogenization protein HflD homolog (205 aa).

This sequence belongs to the HflD family.

The protein localises to the cytoplasm. It localises to the cell inner membrane. This Aliivibrio fischeri (strain ATCC 700601 / ES114) (Vibrio fischeri) protein is High frequency lysogenization protein HflD homolog.